The primary structure comprises 459 residues: Bifunctional protein GlmU (459 aa).

The tract at residues 1 to 230 (MSNRFAVILA…FDETLGVNDR (230 aa)) is pyrophosphorylase. UDP-N-acetyl-alpha-D-glucosamine is bound by residues 9 to 12 (LAAG), lysine 23, glutamine 73, and 78 to 79 (GT). Aspartate 103 serves as a coordination point for Mg(2+). Positions 140, 155, 170, and 228 each coordinate UDP-N-acetyl-alpha-D-glucosamine. Mg(2+) is bound at residue asparagine 228. The segment at 231–251 (VALSQAEIIMKNRINRKNMVN) is linker. The tract at residues 252–459 (GVTIIDPSNT…VDQLLNKKKS (208 aa)) is N-acetyltransferase. 2 residues coordinate UDP-N-acetyl-alpha-D-glucosamine: arginine 333 and lysine 351. The active-site Proton acceptor is the histidine 363. UDP-N-acetyl-alpha-D-glucosamine-binding residues include tyrosine 366 and asparagine 377. Residues 386–387 (NY), alanine 423, and arginine 440 each bind acetyl-CoA.

The protein in the N-terminal section; belongs to the N-acetylglucosamine-1-phosphate uridyltransferase family. It in the C-terminal section; belongs to the transferase hexapeptide repeat family. As to quaternary structure, homotrimer. The cofactor is Mg(2+).

The protein resides in the cytoplasm. The catalysed reaction is alpha-D-glucosamine 1-phosphate + acetyl-CoA = N-acetyl-alpha-D-glucosamine 1-phosphate + CoA + H(+). It carries out the reaction N-acetyl-alpha-D-glucosamine 1-phosphate + UTP + H(+) = UDP-N-acetyl-alpha-D-glucosamine + diphosphate. Its pathway is nucleotide-sugar biosynthesis; UDP-N-acetyl-alpha-D-glucosamine biosynthesis; N-acetyl-alpha-D-glucosamine 1-phosphate from alpha-D-glucosamine 6-phosphate (route II): step 2/2. It participates in nucleotide-sugar biosynthesis; UDP-N-acetyl-alpha-D-glucosamine biosynthesis; UDP-N-acetyl-alpha-D-glucosamine from N-acetyl-alpha-D-glucosamine 1-phosphate: step 1/1. The protein operates within bacterial outer membrane biogenesis; LPS lipid A biosynthesis. Functionally, catalyzes the last two sequential reactions in the de novo biosynthetic pathway for UDP-N-acetylglucosamine (UDP-GlcNAc). The C-terminal domain catalyzes the transfer of acetyl group from acetyl coenzyme A to glucosamine-1-phosphate (GlcN-1-P) to produce N-acetylglucosamine-1-phosphate (GlcNAc-1-P), which is converted into UDP-GlcNAc by the transfer of uridine 5-monophosphate (from uridine 5-triphosphate), a reaction catalyzed by the N-terminal domain. This is Bifunctional protein GlmU from Bacillus cereus (strain ZK / E33L).